The primary structure comprises 291 residues: 29 kDa ribonucleoprotein B, chloroplastic (291 aa).

Residues 87–165 (LKLFVGNLPF…RAIRVNAGPA (79 aa)) enclose the RRM 1 domain. The tract at residues 164–202 (PAPAKRENSSFGGGRGGNSSYGGGRDGNSSFGGARGGRS) is disordered. The interval 166 to 206 (PAKRENSSFGGGRGGNSSYGGGRDGNSSFGGARGGRSVDSS) is linker (Gly-rich). Residues 174-189 (FGGGRGGNSSYGGGRD) show a composition bias toward gly residues. Residues 207–285 (NRVYVGNLSW…RSIRVSAAEE (79 aa)) enclose the RRM 2 domain.

It is found in the plastid. Its subcellular location is the chloroplast. In terms of biological role, could be involved in splicing and/or processing of chloroplast RNA's. The protein is 29 kDa ribonucleoprotein B, chloroplastic of Nicotiana sylvestris (Wood tobacco).